The following is a 141-amino-acid chain: Large ribosomal subunit protein uL16 (141 aa).

A disordered region spans residues 1 to 23 (MLMPKRTKWRKQQKGRNRGKSFR).

The protein belongs to the universal ribosomal protein uL16 family. As to quaternary structure, part of the 50S ribosomal subunit.

Its function is as follows. Binds 23S rRNA and is also seen to make contacts with the A and possibly P site tRNAs. The sequence is that of Large ribosomal subunit protein uL16 from Sulfurovum sp. (strain NBC37-1).